A 218-amino-acid polypeptide reads, in one-letter code: Peptide methionine sulfoxide reductase MsrA (218 aa).

Cys57 is a catalytic residue.

It belongs to the MsrA Met sulfoxide reductase family.

The enzyme catalyses L-methionyl-[protein] + [thioredoxin]-disulfide + H2O = L-methionyl-(S)-S-oxide-[protein] + [thioredoxin]-dithiol. It catalyses the reaction [thioredoxin]-disulfide + L-methionine + H2O = L-methionine (S)-S-oxide + [thioredoxin]-dithiol. Functionally, has an important function as a repair enzyme for proteins that have been inactivated by oxidation. Catalyzes the reversible oxidation-reduction of methionine sulfoxide in proteins to methionine. The chain is Peptide methionine sulfoxide reductase MsrA from Brucella melitensis biotype 2 (strain ATCC 23457).